The sequence spans 197 residues: Putative NADH dehydrogenase/NAD(P)H nitroreductase Lcho_1290 (197 aa).

Belongs to the nitroreductase family. HadB/RutE subfamily. It depends on FMN as a cofactor.

In Leptothrix cholodnii (strain ATCC 51168 / LMG 8142 / SP-6) (Leptothrix discophora (strain SP-6)), this protein is Putative NADH dehydrogenase/NAD(P)H nitroreductase Lcho_1290.